A 353-amino-acid polypeptide reads, in one-letter code: Rhodopsin (353 aa).

Topologically, residues 1–36 (MNGTEGPFFYVPMLNTTGIVRSPYDYPQYYLVNPAA) are extracellular. Asparagine 2 and asparagine 15 each carry an N-linked (GlcNAc...) asparagine glycan. A helical transmembrane segment spans residues 37–61 (YAALGAYMFLLILLGFPINFLTLYV). Topologically, residues 62–73 (TIEHKKLRTPLN) are cytoplasmic. A helical membrane pass occupies residues 74–96 (YILLNLAVANLFMVFGGFTTTMY). Residues 97–110 (TSMHGYFVLGRLGC) lie on the Extracellular side of the membrane. A disulfide bridge links cysteine 110 with cysteine 187. The helical transmembrane segment at 111 to 133 (NLEGFFATLGGEIGLWSLVVLAI) threads the bilayer. Positions 134 to 136 (ERW) match the 'Ionic lock' involved in activated form stabilization motif. At 134–152 (ERWMVVCKPISNFRFGENH) the chain is on the cytoplasmic side. A helical membrane pass occupies residues 153 to 173 (AIMGLAFTWIMACACAVPPLV). At 174 to 202 (GWSRYIPEGMQCSCGVDYYTRAEGFNNES) the chain is on the extracellular side. Residue asparagine 200 is glycosylated (N-linked (GlcNAc...) asparagine). A helical membrane pass occupies residues 203–224 (FVVYMFICHFLIPMAVVFFCYG). Topologically, residues 225-252 (RLLCAVKEAAAAQQESETTQRAEREVTR) are cytoplasmic. A helical transmembrane segment spans residues 253 to 274 (MVVIMVVAFLICWLPYAGVAWW). Over 275 to 286 (IFTHQGSEFGPV) the chain is Extracellular. A helical transmembrane segment spans residues 287-308 (FMTIPAFFAKSSSIYNPLIYIC). Lysine 296 is modified (N6-(retinylidene)lysine). Over 309 to 353 (MNKQFRHCMITTLCCGKNPFEEEEGASTTSKTEASSVSSSSVSPA) the chain is Cytoplasmic. 2 S-palmitoyl cysteine lipidation sites follow: cysteine 322 and cysteine 323. A disordered region spans residues 330 to 353 (EEEGASTTSKTEASSVSSSSVSPA). Positions 334–353 (ASTTSKTEASSVSSSSVSPA) are enriched in low complexity.

This sequence belongs to the G-protein coupled receptor 1 family. Opsin subfamily. Phosphorylated on some or all of the serine and threonine residues present in the C-terminal region. Post-translationally, contains one covalently linked retinal chromophore.

Its subcellular location is the membrane. The protein localises to the cell projection. It localises to the cilium. The protein resides in the photoreceptor outer segment. Its function is as follows. Photoreceptor required for image-forming vision at low light intensity. While most salt water fish species use retinal as chromophore, most freshwater fish use 3-dehydroretinal, or a mixture of retinal and 3-dehydroretinal. Light-induced isomerization of 11-cis to all-trans retinal triggers a conformational change that activates signaling via G-proteins. Subsequent receptor phosphorylation mediates displacement of the bound G-protein alpha subunit by arrestin and terminates signaling. The sequence is that of Rhodopsin (rho) from Tetraodon nigroviridis (Spotted green pufferfish).